Consider the following 396-residue polypeptide: MTKTIAINAGSSSLKWQLYLMPEEKVLAKGLIERIGLKDSISTVKFDGRSEQQILDIENHIQAVKILLDDLIRFDIIKAYDEITGVGHRVVAGGEYFKESTVVEGDVLEKVEELSLLAPLHNPANAAGVRAFKELLPDITSVVVFDTSFHTSMPEKAYRYPLPTKYYTENKVRKYGAHGTSHQFVAGEAAKLLGRPLEDLKLITCHIGNGGSITAVKAGKSVDTSMGFTPLGGIMMGTRTGDIDPAIIPYLMQYTEDFNTPEDISRVLNRESGLLGVSANSSDMRDIEAAVAEGNHEASLAYEMYVDRIQKHIGQYLAVLNGADAIVFTAGVGENAESFRRDVISGISWFGCDVDDEKNVFGVTGDISTEAAKIRVLVIPTDEELVIARDVERLKK.

N8 serves as a coordination point for Mg(2+). An ATP-binding site is contributed by K15. A substrate-binding site is contributed by R89. D146 (proton donor/acceptor) is an active-site residue. Residues 206–210 (HIGNG), 283–285 (DMR), and 331–335 (GVGEN) each bind ATP. E383 contacts Mg(2+).

It belongs to the acetokinase family. Homodimer. Mg(2+) serves as cofactor. Mn(2+) is required as a cofactor.

It localises to the cytoplasm. It catalyses the reaction acetate + ATP = acetyl phosphate + ADP. Its pathway is metabolic intermediate biosynthesis; acetyl-CoA biosynthesis; acetyl-CoA from acetate: step 1/2. Its function is as follows. Catalyzes the formation of acetyl phosphate from acetate and ATP. Can also catalyze the reverse reaction. The chain is Acetate kinase from Streptococcus pneumoniae serotype 2 (strain D39 / NCTC 7466).